A 425-amino-acid polypeptide reads, in one-letter code: Serine--tRNA ligase (425 aa).

L-serine is bound at residue 230 to 232 (TAE). 261–263 (RSE) contributes to the ATP binding site. Glu-284 contacts L-serine. 348-351 (EISS) serves as a coordination point for ATP. Ser-384 provides a ligand contact to L-serine.

This sequence belongs to the class-II aminoacyl-tRNA synthetase family. Type-1 seryl-tRNA synthetase subfamily. As to quaternary structure, homodimer. The tRNA molecule binds across the dimer.

The protein localises to the cytoplasm. It catalyses the reaction tRNA(Ser) + L-serine + ATP = L-seryl-tRNA(Ser) + AMP + diphosphate + H(+). It carries out the reaction tRNA(Sec) + L-serine + ATP = L-seryl-tRNA(Sec) + AMP + diphosphate + H(+). Its pathway is aminoacyl-tRNA biosynthesis; selenocysteinyl-tRNA(Sec) biosynthesis; L-seryl-tRNA(Sec) from L-serine and tRNA(Sec): step 1/1. Catalyzes the attachment of serine to tRNA(Ser). Is also able to aminoacylate tRNA(Sec) with serine, to form the misacylated tRNA L-seryl-tRNA(Sec), which will be further converted into selenocysteinyl-tRNA(Sec). The chain is Serine--tRNA ligase from Streptococcus pyogenes serotype M6 (strain ATCC BAA-946 / MGAS10394).